The following is a 792-amino-acid chain: Putative cellulose synthase-like protein H3 (792 aa).

The next 2 helical transmembrane spans lie at 25 to 45 and 55 to 75; these read AWML…VRRA and VGGA…FVWL. The segment at 132 to 154 is disordered; the sequence is GRHVRDDGGPGARAAGGDGEQGA. Positions 140–151 are enriched in gly residues; sequence GPGARAAGGDGE. Catalysis depends on residues Asp181 and Asp501. 6 helical membrane-spanning segments follow: residues 579-599, 613-632, 650-670, 706-726, 739-759, and 768-788; these read VWAV…YCLL, FNIT…VEYM, IISA…TIGL, VFIP…IGTW, GPGI…LPFV, and YGIP…FLFC.

This sequence belongs to the glycosyltransferase 2 family. Plant cellulose synthase-like H subfamily.

Its subcellular location is the golgi apparatus membrane. In terms of biological role, thought to be a Golgi-localized beta-glycan synthase that polymerize the backbones of noncellulosic polysaccharides (hemicelluloses) of plant cell wall. The protein is Putative cellulose synthase-like protein H3 (CSLH3) of Oryza sativa subsp. japonica (Rice).